Here is a 194-residue protein sequence, read N- to C-terminus: MIHAVLIFNKKCQPRLVKFYTPVDLPKQKLLLEQVYELISQRNSDFQSSFLVTPPSLLLSNENNNDEVNNEDIQIIYKNYATLYFTFIVDDQESELAILDLIQTFVESLDRCFTEVNELDLIFNWQTLESVLEEIVQGGMVIETNVNRIVASVDELNKAAESTDSKIGRLTSTGFGSALQAFAQGGFAQWATGQ.

It belongs to the adaptor complexes small subunit family. Adaptor protein complex 3 (AP-3) is a heterotetramer composed of 2 large adaptins (APL5 and APL6), a medium adaptin (APM3) and a small adaptin (APS3).

Its subcellular location is the golgi apparatus. It is found in the cytoplasmic vesicle membrane. Functionally, part of the AP-3 complex, an adaptor-related complex which is not clathrin-associated. The complex is associated with the Golgi region as well as more peripheral structures. It facilitates the budding of vesicles from the Golgi membrane and may be directly involved in trafficking to the vacuole. Required for the transport via the ALP pathway, which directs the transport of the cargo proteins PHO8 and VAM3 to the vacuole. The polypeptide is AP-3 complex subunit sigma (APS3) (Saccharomyces cerevisiae (strain ATCC 204508 / S288c) (Baker's yeast)).